Consider the following 464-residue polypeptide: D-inositol 3-phosphate glycosyltransferase (464 aa).

Residues 1–20 (MEGAPRRPDRHARSEEERHV) are compositionally biased toward basic and acidic residues. The disordered stretch occupies residues 1-44 (MEGAPRRPDRHARSEEERHVSQYASRLGRRSPAAPTRRRMLRKP). Histidine 53 lines the 1D-myo-inositol 3-phosphate pocket. Residues 59-60 (QP) and glycine 67 contribute to the UDP-N-acetyl-alpha-D-glucosamine site. Residues 64–69 (DAGGMN), lysine 122, tyrosine 155, threonine 179, and arginine 199 contribute to the 1D-myo-inositol 3-phosphate site. Residues arginine 274, lysine 279, and valine 340 each contribute to the UDP-N-acetyl-alpha-D-glucosamine site. Mg(2+) is bound by residues phenylalanine 349, arginine 350, and alanine 352. UDP-N-acetyl-alpha-D-glucosamine is bound by residues glutamate 362 and glutamate 370. Threonine 376 is a Mg(2+) binding site.

Belongs to the glycosyltransferase group 1 family. MshA subfamily. In terms of assembly, homodimer.

The catalysed reaction is 1D-myo-inositol 3-phosphate + UDP-N-acetyl-alpha-D-glucosamine = 1D-myo-inositol 2-acetamido-2-deoxy-alpha-D-glucopyranoside 3-phosphate + UDP + H(+). In terms of biological role, catalyzes the transfer of a N-acetyl-glucosamine moiety to 1D-myo-inositol 3-phosphate to produce 1D-myo-inositol 2-acetamido-2-deoxy-glucopyranoside 3-phosphate in the mycothiol biosynthesis pathway. This is D-inositol 3-phosphate glycosyltransferase from Streptomyces avermitilis (strain ATCC 31267 / DSM 46492 / JCM 5070 / NBRC 14893 / NCIMB 12804 / NRRL 8165 / MA-4680).